A 592-amino-acid polypeptide reads, in one-letter code: Protein US23 (592 aa).

Residues 407-491 (PRSLGDGEEE…NNVVPNVDRR (85 aa)) are disordered. Residues 460–481 (ADDEEQGEDDDDSGAEPMEPEE) show a composition bias toward acidic residues.

The protein belongs to the herpesviridae US22 family.

It localises to the virion tegument. The protein is Protein US23 (US23) of Homo sapiens (Human).